The following is a 791-amino-acid chain: Ataxin-1 (791 aa).

Basic and acidic residues predominate over residues 1-30 (MKSNQERSNECLPPKKREIPATSRPSEEKA). The interval 1–36 (MKSNQERSNECLPPKKREIPATSRPSEEKATALPSD) is disordered. Lysine 16 is covalently cross-linked (Glycyl lysine isopeptide (Lys-Gly) (interchain with G-Cter in SUMO)). 2 positions are modified to phosphoserine: serine 81 and serine 87. Disordered regions lie at residues 187-240 (SQAP…TSPP) and 298-402 (EVLN…HRSY). Lysine 193 participates in a covalent cross-link: Glycyl lysine isopeptide (Lys-Gly) (interchain with G-Cter in SUMO). At serine 213 the chain carries Phosphoserine. Threonine 218 carries the post-translational modification Phosphothreonine. Polar residues-rich tracts occupy residues 219 to 236 (QQNQ…SGRA), 312 to 327 (ASSS…SSKS), and 362 to 388 (PNSS…TLND). Serine 229 is modified (phosphoserine). The tract at residues 470-580 (VGSPDMDTPG…TEDFIQSAEI (111 aa)) is self-association. An interaction with USP7 region spans residues 514–791 (LVTQAAYPAM…CIEGRSNVGK (278 aa)). An RNA-binding region spans residues 516–742 (TQAAYPAMVQ…FLSKIEPSKP (227 aa)). The AXH domain maps to 538–669 (SPTTASPTLP…SLTLKNLKNG (132 aa)). Glycyl lysine isopeptide (Lys-Gly) (interchain with G-Cter in SUMO) cross-links involve residues lysine 585, lysine 672, and lysine 721. The tract at residues 736–774 (KIEPSKPTATRKRRWSAPETRKLEKSEDEPPLTLPKPSL) is disordered. A Phosphoserine modification is found at serine 751. The Nuclear localization signal signature appears at 770-773 (PKPS).

The protein belongs to the ATXN1 family. In terms of assembly, homooligomer. Interacts with PQBP1, UBQLN4 and USP7. Interacts with ANP32A. Interacts with CIC. Directly interacts with RBPJ; this interaction is disrupted in the presence of Notch intracellular domain. Interacts with ATXN1L; competes with ATXN1L for RBPJ-binding. Found in a complex with CIC and ATXN1L. In terms of processing, ubiquitinated by UBE3A, leading to its degradation by the proteasome. The presence of poly-Gln repeats in trangenic models developed to replicate phenotypes of the spinocerebellar ataxia 1 disease (SCA1) impair ubiquitination and degradation, leading to accumulation of Atxn1 in neurons and subsequent toxicity. Post-translationally, sumoylation is dependent on nuclear localization and phosphorylation at Ser-751. Expressed in the cortex and hypothalamus (at protein level). Widely expressed. In brain, the pattern of distribution is limited to neuron populations.

It is found in the cytoplasm. Its subcellular location is the nucleus. Chromatin-binding factor that repress Notch signaling in the absence of Notch intracellular domain by acting as a CBF1 corepressor. Binds to the HEY promoter and might assist, along with NCOR2, RBPJ-mediated repression. May be involved in RNA metabolism. In concert with CIC and ATXN1L, involved in brain development. In Mus musculus (Mouse), this protein is Ataxin-1 (Atxn1).